The chain runs to 501 residues: Putative ribose/galactose/methyl galactoside import ATP-binding protein 1 (501 aa).

ABC transporter domains are found at residues 5–237 (VSLS…VGRQ) and 249–492 (VPGE…MTRS). 37–44 (GENGAGKS) is an ATP binding site.

Belongs to the ABC transporter superfamily. Carbohydrate importer 2 (CUT2) (TC 3.A.1.2) family.

The protein resides in the cell inner membrane. The enzyme catalyses D-ribose(out) + ATP + H2O = D-ribose(in) + ADP + phosphate + H(+). It catalyses the reaction D-galactose(out) + ATP + H2O = D-galactose(in) + ADP + phosphate + H(+). Its function is as follows. Part of an ABC transporter complex involved in carbohydrate import. Could be involved in ribose, galactose and/or methyl galactoside import. Responsible for energy coupling to the transport system. This Rhizobium meliloti (strain 1021) (Ensifer meliloti) protein is Putative ribose/galactose/methyl galactoside import ATP-binding protein 1.